We begin with the raw amino-acid sequence, 402 residues long: uncharacterized protein (402 aa).

Transmembrane regions (helical) follow at residues 11-31 (LALA…IDMY), 48-68 (LVQL…LIVG), 80-100 (LLIC…SPNI), 108-125 (FLQG…RAIV), 140-160 (LLMV…GAIL), 167-187 (WHTI…LIAL), 219-239 (FMGY…YVSG), 254-274 (VFSI…FIIG), 286-306 (LRIA…MTMI), 308-328 (GPLA…GMVL), 347-367 (SALL…LVGI), and 373-393 (VPMG…FFGL).

Belongs to the major facilitator superfamily. Bcr/CmlA family.

The protein resides in the cell membrane. This is an uncharacterized protein from Bacillus subtilis (strain 168).